The primary structure comprises 289 residues: ATP synthase gamma chain (289 aa).

The protein belongs to the ATPase gamma chain family. As to quaternary structure, F-type ATPases have 2 components, CF(1) - the catalytic core - and CF(0) - the membrane proton channel. CF(1) has five subunits: alpha(3), beta(3), gamma(1), delta(1), epsilon(1). CF(0) has three main subunits: a, b and c.

Its subcellular location is the cell membrane. In terms of biological role, produces ATP from ADP in the presence of a proton gradient across the membrane. The gamma chain is believed to be important in regulating ATPase activity and the flow of protons through the CF(0) complex. The polypeptide is ATP synthase gamma chain (Mycoplasmoides gallisepticum (strain R(low / passage 15 / clone 2)) (Mycoplasma gallisepticum)).